The sequence spans 110 residues: UPF0339 protein SO_3888 (110 aa).

2 consecutive repeat copies span residues 10–58 (SSND…RYAK) and 61–109 (AKND…IKDL).

It belongs to the UPF0339 family. Duplicated subfamily.

The sequence is that of UPF0339 protein SO_3888 from Shewanella oneidensis (strain ATCC 700550 / JCM 31522 / CIP 106686 / LMG 19005 / NCIMB 14063 / MR-1).